The primary structure comprises 594 residues: Arginine--tRNA ligase (594 aa).

A 'HIGH' region motif is present at residues 139–149 (ANPTGPLHVGH).

The protein belongs to the class-I aminoacyl-tRNA synthetase family. Monomer.

The protein localises to the cytoplasm. It carries out the reaction tRNA(Arg) + L-arginine + ATP = L-arginyl-tRNA(Arg) + AMP + diphosphate. This is Arginine--tRNA ligase from Burkholderia thailandensis (strain ATCC 700388 / DSM 13276 / CCUG 48851 / CIP 106301 / E264).